The sequence spans 1481 residues: ABC multidrug transporter atrH (1481 aa).

A compositionally biased stretch (basic and acidic residues) spans Met1–Leu10. 2 disordered regions span residues Met1–Gln45 and Ile61–Phe89. N-linked (GlcNAc...) asparagine glycosylation is found at Asn19, Asn76, and Asn320. The 263-residue stretch at Ala134–Glu396 folds into the ABC transporter 1 domain. The helical transmembrane segment at Met507–Tyr527 threads the bilayer. Asn530 carries an N-linked (GlcNAc...) asparagine glycan. 5 consecutive transmembrane segments (helical) span residues Leu542–Trp562, Leu587–Phe607, Gly616–Phe636, Glu650–Val670, and Phe758–Leu778. Residues Phe838–Ser1081 form the ABC transporter 2 domain. Gly874–Thr881 lines the ATP pocket. 6 helical membrane passes run Tyr1174 to Trp1194, Ile1210 to Met1230, Ala1249 to Ala1269, Leu1298 to Ile1318, Ile1327 to Val1347, and Ala1358 to Val1378. Residue Asn1395 is glycosylated (N-linked (GlcNAc...) asparagine). Residues Val1446–Leu1466 traverse the membrane as a helical segment.

It belongs to the ABC transporter superfamily. ABCG family. PDR (TC 3.A.1.205) subfamily.

It is found in the cell membrane. In terms of biological role, pleiotropic ABC efflux transporter involved in the basal level of azole susceptibility. The sequence is that of ABC multidrug transporter atrH from Aspergillus oryzae (strain ATCC 42149 / RIB 40) (Yellow koji mold).